The primary structure comprises 817 residues: Probable beta-glucosidase G (817 aa).

The first 20 residues, 1–20 (MASIAHLIFSGLLAATVANS), serve as a signal peptide directing secretion. N40, N58, N229, and N276 each carry an N-linked (GlcNAc...) asparagine glycan. D304 is an active-site residue. N-linked (GlcNAc...) asparagine glycans are attached at residues N343, N350, N402, N507, N563, N584, N623, N662, N679, and N715.

It belongs to the glycosyl hydrolase 3 family.

It localises to the secreted. The enzyme catalyses Hydrolysis of terminal, non-reducing beta-D-glucosyl residues with release of beta-D-glucose.. It functions in the pathway glycan metabolism; cellulose degradation. Functionally, beta-glucosidases are one of a number of cellulolytic enzymes involved in the degradation of cellulosic biomass. Catalyzes the last step releasing glucose from the inhibitory cellobiose. This Neosartorya fischeri (strain ATCC 1020 / DSM 3700 / CBS 544.65 / FGSC A1164 / JCM 1740 / NRRL 181 / WB 181) (Aspergillus fischerianus) protein is Probable beta-glucosidase G (bglG).